The primary structure comprises 398 residues: GATA transcription factor 21 (398 aa).

Residues 20 to 51 form a disordered region; it reads QPFFYPLGSSSSLHHHHHHHHHQVPSNSSSSS. The segment covering 32-42 has biased composition (basic residues); sequence LHHHHHHHHHQ. The Nuclear localization signal motif lies at 109 to 116; it reads PKKETRLK. Residues 122–144 form a disordered region; it reads KDHEDQPHPLHQNPTKPDSDSDK. A GATA-type zinc finger spans residues 226–280; it reads NGVIRVCSDCNTTKTPLWRSGPRGPKSLCNACGIRQRKARRAAMAAAAAAGDQEV. Positions 289 to 353 are disordered; it reads LPLKKKLQNK…KSTTSSNSSI (65 aa). Residues 291-302 show a composition bias toward basic residues; that stretch reads LKKKLQNKKKRS. The segment covering 343-353 has biased composition (low complexity); the sequence is SKSTTSSNSSI.

This sequence belongs to the type IV zinc-finger family. Class B subfamily. As to quaternary structure, interacts with SNL1. Forms heterodimers with GATA18. In terms of tissue distribution, expressed predominantly in leaves, and barely in stems, flowers and siliques.

Its subcellular location is the nucleus. Its function is as follows. Transcriptional regulator that specifically binds 5'-GATA-3' or 5'-GAT-3' motifs within gene promoters. Involved in the modulation of chloroplast development, growth and division in a cytokinin-dependent manner. Repressor of the gibberellic acid (GA) signaling pathway that represses flowering and modulates greening, in a SOC1-dependent manner. Prevents the accumulation of SOC1 during flowering. Promotes chlorophyll biosynthesis throughout the plant, by regulating chlorophyll biosynthetic genes (e.g. HEMA1 and GUN4) and chloroplast localized glutamate synthase (e.g. GLU1). Involved in the regulation of sugar-sensing genes (e.g. HXK1, HXK2, STP13 and PLT6). Regulator of germination, senescence, elongation growth and flowering time. Also influences leaf starch content. In Arabidopsis thaliana (Mouse-ear cress), this protein is GATA transcription factor 21.